Reading from the N-terminus, the 395-residue chain is ATP phosphoribosyltransferase regulatory subunit (395 aa).

This sequence belongs to the class-II aminoacyl-tRNA synthetase family. HisZ subfamily. In terms of assembly, heteromultimer composed of HisG and HisZ subunits.

It is found in the cytoplasm. It participates in amino-acid biosynthesis; L-histidine biosynthesis; L-histidine from 5-phospho-alpha-D-ribose 1-diphosphate: step 1/9. Its function is as follows. Required for the first step of histidine biosynthesis. May allow the feedback regulation of ATP phosphoribosyltransferase activity by histidine. The protein is ATP phosphoribosyltransferase regulatory subunit of Stutzerimonas stutzeri (Pseudomonas stutzeri).